Reading from the N-terminus, the 264-residue chain is Thymidylate synthase (264 aa).

Residue Arg-21 coordinates dUMP. Residue His-51 coordinates (6R)-5,10-methylene-5,6,7,8-tetrahydrofolate. Arg-126–Arg-127 contributes to the dUMP binding site. The Nucleophile role is filled by Cys-146. Residues Arg-166–Asp-169, Asn-177, and His-207–Tyr-209 each bind dUMP. Asp-169 serves as a coordination point for (6R)-5,10-methylene-5,6,7,8-tetrahydrofolate. Ala-263 is a (6R)-5,10-methylene-5,6,7,8-tetrahydrofolate binding site.

This sequence belongs to the thymidylate synthase family. Bacterial-type ThyA subfamily. As to quaternary structure, homodimer.

It localises to the cytoplasm. The enzyme catalyses dUMP + (6R)-5,10-methylene-5,6,7,8-tetrahydrofolate = 7,8-dihydrofolate + dTMP. The protein operates within pyrimidine metabolism; dTTP biosynthesis. In terms of biological role, catalyzes the reductive methylation of 2'-deoxyuridine-5'-monophosphate (dUMP) to 2'-deoxythymidine-5'-monophosphate (dTMP) while utilizing 5,10-methylenetetrahydrofolate (mTHF) as the methyl donor and reductant in the reaction, yielding dihydrofolate (DHF) as a by-product. This enzymatic reaction provides an intracellular de novo source of dTMP, an essential precursor for DNA biosynthesis. The sequence is that of Thymidylate synthase from Alkalilimnicola ehrlichii (strain ATCC BAA-1101 / DSM 17681 / MLHE-1).